We begin with the raw amino-acid sequence, 231 residues long: Large ribosomal subunit protein uL1 (231 aa).

Belongs to the universal ribosomal protein uL1 family. As to quaternary structure, part of the 50S ribosomal subunit.

Binds directly to 23S rRNA. The L1 stalk is quite mobile in the ribosome, and is involved in E site tRNA release. Functionally, protein L1 is also a translational repressor protein, it controls the translation of the L11 operon by binding to its mRNA. This is Large ribosomal subunit protein uL1 from Chlorobaculum tepidum (strain ATCC 49652 / DSM 12025 / NBRC 103806 / TLS) (Chlorobium tepidum).